The following is a 350-amino-acid chain: Hydroxymethylglutaryl-CoA synthase (350 aa).

Glutamate 83 (proton donor/acceptor) is an active-site residue. Cysteine 115 serves as the catalytic Acyl-thioester intermediate. The (3S)-3-hydroxy-3-methylglutaryl-CoA site is built by cysteine 115 and threonine 156. Arginine 204 contacts CoA. The (3S)-3-hydroxy-3-methylglutaryl-CoA site is built by threonine 206 and histidine 239. Residue histidine 239 is the Proton donor/acceptor of the active site. Residue lysine 244 coordinates CoA. Positions 271 and 301 each coordinate (3S)-3-hydroxy-3-methylglutaryl-CoA.

The protein belongs to the thiolase-like superfamily. Archaeal HMG-CoA synthase family. As to quaternary structure, interacts with acetoacetyl-CoA thiolase that catalyzes the precedent step in the pathway and with a DUF35 protein. The acetoacetyl-CoA thiolase/HMG-CoA synthase complex channels the intermediate via a fused CoA-binding site, which allows for efficient coupling of the endergonic thiolase reaction with the exergonic HMGCS reaction.

It catalyses the reaction acetoacetyl-CoA + acetyl-CoA + H2O = (3S)-3-hydroxy-3-methylglutaryl-CoA + CoA + H(+). It functions in the pathway metabolic intermediate biosynthesis; (R)-mevalonate biosynthesis; (R)-mevalonate from acetyl-CoA: step 2/3. In terms of biological role, catalyzes the condensation of acetyl-CoA with acetoacetyl-CoA to form 3-hydroxy-3-methylglutaryl-CoA (HMG-CoA). Functions in the mevalonate (MVA) pathway leading to isopentenyl diphosphate (IPP), a key precursor for the biosynthesis of isoprenoid compounds that are building blocks of archaeal membrane lipids. This is Hydroxymethylglutaryl-CoA synthase from Thermococcus sibiricus (strain DSM 12597 / MM 739).